Consider the following 245-residue polypeptide: 1-(5-phosphoribosyl)-5-[(5-phosphoribosylamino)methylideneamino] imidazole-4-carboxamide isomerase (245 aa).

Residue D8 is the Proton acceptor of the active site. D131 (proton donor) is an active-site residue.

This sequence belongs to the HisA/HisF family.

It localises to the cytoplasm. The catalysed reaction is 1-(5-phospho-beta-D-ribosyl)-5-[(5-phospho-beta-D-ribosylamino)methylideneamino]imidazole-4-carboxamide = 5-[(5-phospho-1-deoxy-D-ribulos-1-ylimino)methylamino]-1-(5-phospho-beta-D-ribosyl)imidazole-4-carboxamide. It functions in the pathway amino-acid biosynthesis; L-histidine biosynthesis; L-histidine from 5-phospho-alpha-D-ribose 1-diphosphate: step 4/9. In Verminephrobacter eiseniae (strain EF01-2), this protein is 1-(5-phosphoribosyl)-5-[(5-phosphoribosylamino)methylideneamino] imidazole-4-carboxamide isomerase.